Consider the following 447-residue polypeptide: Biotin carboxylase (447 aa).

The Biotin carboxylation domain maps to 1–447 (MKFDKILIAN…STSFVQEMNK (447 aa)). Residues K117, K159, 165–166 (GG), 201–204 (EKFI), and H209 each bind ATP. Residues 121–318 (KETMQKAGVP…LLVEQIRIAQ (198 aa)) form the ATP-grasp domain. K238 is a hydrogencarbonate binding site. Residues E276 and E289 each contribute to the ATP site. The Mg(2+) site is built by E276, E289, and N291. E276, E289, and N291 together coordinate Mn(2+). Hydrogencarbonate contacts are provided by R293, V296, and R339. Residue R293 is part of the active site. R339 lines the biotin pocket.

Acetyl-CoA carboxylase is a heterohexamer of biotin carboxyl carrier protein, biotin carboxylase and the two subunits of carboxyl transferase in a 2:2 complex. It depends on Mg(2+) as a cofactor. Mn(2+) serves as cofactor.

The enzyme catalyses N(6)-biotinyl-L-lysyl-[protein] + hydrogencarbonate + ATP = N(6)-carboxybiotinyl-L-lysyl-[protein] + ADP + phosphate + H(+). Its pathway is lipid metabolism; malonyl-CoA biosynthesis; malonyl-CoA from acetyl-CoA: step 1/1. Functionally, this protein is a component of the acetyl coenzyme A carboxylase complex; first, biotin carboxylase catalyzes the carboxylation of the carrier protein and then the transcarboxylase transfers the carboxyl group to form malonyl-CoA. The polypeptide is Biotin carboxylase (accC) (Nostoc sp. (strain PCC 7120 / SAG 25.82 / UTEX 2576)).